Here is a 453-residue protein sequence, read N- to C-terminus: AP-4 complex subunit mu-1 (453 aa).

Residues 184-452 enclose the MHD domain; that stretch reads KNEVFLDVVE…LSHSDAYVIR (269 aa).

Belongs to the adaptor complexes medium subunit family. In terms of assembly, adaptor protein complex 4 (AP-4) is a heterotetramer composed of two large adaptins (epsilon-type subunit AP4E1 and beta-type subunit AP4B1), a medium adaptin (mu-type subunit AP4M1) and a small adaptin (sigma-type AP4S1). Interacts with tyrosine-based sorting signals on the cytoplasmic tail of cargo proteins such as APP, ATG9A, LAMP2 and NAGPA. Interacts with the C-terminal domain of GRID2. Interacts with GRIA1 and GRIA2; the interaction is indirect via CACNG3. Interacts with CACNG3; CACNG3 associates GRIA1 and GRIA2 with the adaptor protein complex 4 (AP-4) to target them to the somatodendritic compartment of neurons. Interacts with HOOK1 and HOOK2; the interactions are direct, mediate the interaction between FTS-Hook-FHIP (FHF) complex and AP-4 and the perinuclear distribution of AP-4. As to expression, ubiquitous. Highly expressed in testis and lowly expressed in brain and lung.

It is found in the golgi apparatus. The protein resides in the trans-Golgi network membrane. Its subcellular location is the early endosome. Its function is as follows. Component of the adaptor protein complex 4 (AP-4). Adaptor protein complexes are vesicle coat components involved both in vesicle formation and cargo selection. They control the vesicular transport of proteins in different trafficking pathways. AP-4 forms a non clathrin-associated coat on vesicles departing the trans-Golgi network (TGN) and may be involved in the targeting of proteins from the trans-Golgi network (TGN) to the endosomal-lysosomal system. It is also involved in protein sorting to the basolateral membrane in epithelial cells and the proper asymmetric localization of somatodendritic proteins in neurons. Within AP-4, the mu-type subunit AP4M1 is directly involved in the recognition and binding of tyrosine-based sorting signals found in the cytoplasmic part of cargos. The adaptor protein complex 4 (AP-4) may also recognize other types of sorting signal. The sequence is that of AP-4 complex subunit mu-1 from Homo sapiens (Human).